Here is a 964-residue protein sequence, read N- to C-terminus: Protein translocase subunit SecA (964 aa).

Residues glutamine 86, 104–108 (GEGKT), and aspartate 494 contribute to the ATP site. The disordered stretch occupies residues 848–964 (AESADTIAVA…YKMCHGQNEK (117 aa)). Residues 871–882 (AEGEVEEEDEDT) show a composition bias toward acidic residues. The segment covering 889 to 900 (AESAAASGAGES) has biased composition (low complexity). The Zn(2+) site is built by cysteine 947, cysteine 949, cysteine 958, and histidine 959.

It belongs to the SecA family. As to quaternary structure, monomer and homodimer. Part of the essential Sec protein translocation apparatus which comprises SecA, SecYEG and auxiliary proteins SecDF. Other proteins may also be involved. The cofactor is Zn(2+).

The protein resides in the cell membrane. It is found in the cytoplasm. It carries out the reaction ATP + H2O + cellular proteinSide 1 = ADP + phosphate + cellular proteinSide 2.. Functionally, part of the Sec protein translocase complex. Interacts with the SecYEG preprotein conducting channel. Has a central role in coupling the hydrolysis of ATP to the transfer of proteins into and across the cell membrane, serving as an ATP-driven molecular motor driving the stepwise translocation of polypeptide chains across the membrane. This is Protein translocase subunit SecA from Bifidobacterium longum (strain NCC 2705).